The following is a 72-amino-acid chain: DNA gyrase inhibitor YacG (72 aa).

The Zn(2+) site is built by C14, C17, C33, and C37.

The protein belongs to the DNA gyrase inhibitor YacG family. Interacts with GyrB. It depends on Zn(2+) as a cofactor.

Functionally, inhibits all the catalytic activities of DNA gyrase by preventing its interaction with DNA. Acts by binding directly to the C-terminal domain of GyrB, which probably disrupts DNA binding by the gyrase. The chain is DNA gyrase inhibitor YacG from Mannheimia succiniciproducens (strain KCTC 0769BP / MBEL55E).